A 244-amino-acid chain; its full sequence is tRNA (guanine-N(7)-)-methyltransferase (244 aa).

The interval 1–24 is disordered; the sequence is MTDSHVPHPESPAVEEGEERPHRR. S-adenosyl-L-methionine contacts are provided by Glu74, Glu99, Asp126, and Asp149. Asp149 is an active-site residue. Residues Lys153, Asp185, and 222–225 contribute to the substrate site; that span reads TKFE.

Belongs to the class I-like SAM-binding methyltransferase superfamily. TrmB family.

The catalysed reaction is guanosine(46) in tRNA + S-adenosyl-L-methionine = N(7)-methylguanosine(46) in tRNA + S-adenosyl-L-homocysteine. It functions in the pathway tRNA modification; N(7)-methylguanine-tRNA biosynthesis. Its function is as follows. Catalyzes the formation of N(7)-methylguanine at position 46 (m7G46) in tRNA. The sequence is that of tRNA (guanine-N(7)-)-methyltransferase from Pseudomonas savastanoi pv. phaseolicola (strain 1448A / Race 6) (Pseudomonas syringae pv. phaseolicola (strain 1448A / Race 6)).